The sequence spans 932 residues: Glycine dehydrogenase (decarboxylating) (932 aa).

An N6-(pyridoxal phosphate)lysine modification is found at Lys-685.

Belongs to the GcvP family. As to quaternary structure, the glycine cleavage system is composed of four proteins: P, T, L and H. The cofactor is pyridoxal 5'-phosphate.

The enzyme catalyses N(6)-[(R)-lipoyl]-L-lysyl-[glycine-cleavage complex H protein] + glycine + H(+) = N(6)-[(R)-S(8)-aminomethyldihydrolipoyl]-L-lysyl-[glycine-cleavage complex H protein] + CO2. In terms of biological role, the glycine cleavage system catalyzes the degradation of glycine. The P protein binds the alpha-amino group of glycine through its pyridoxal phosphate cofactor; CO(2) is released and the remaining methylamine moiety is then transferred to the lipoamide cofactor of the H protein. The protein is Glycine dehydrogenase (decarboxylating) of Brucella canis (strain ATCC 23365 / NCTC 10854 / RM-666).